The chain runs to 342 residues: UDP-N-acetylglucosamine transporter YEA4 (342 aa).

The Cytoplasmic portion of the chain corresponds to 1-6 (MWNSLK). A helical membrane pass occupies residues 7–27 (AFALVFGGCCSNVITFETLMS). At 28–35 (NETGSINN) the chain is on the lumenal side. Residues 36 to 56 (LITFCQFLFVTCQGLPEFLDV) form a helical membrane-spanning segment. Residues 57–61 (HQPFP) are Cytoplasmic-facing. The chain crosses the membrane as a helical span at residues 62 to 82 (YFKPLKTPLHVYVITVVLFYI). The Lumenal portion of the chain corresponds to 83–96 (SSTTNNNVFKYNIS). A helical transmembrane segment spans residues 97 to 117 (IPIHIVFRCFGTVITMFTCWL). Residues 118 to 123 (LNGRKY) are Cytoplasmic-facing. A helical transmembrane segment spans residues 124-144 (TKIQILSTLFLTIGAIIASLF). The Lumenal portion of the chain corresponds to 145–168 (KDADFRYQDLKLQAWKIGSDQSVD). A helical membrane pass occupies residues 169–189 (LTFIFGICILVLSSFTSSLLS). At 190–253 (AYNERTYQKY…GGKILVPREE (64 aa)) the chain is on the cytoplasmic side. The chain crosses the membrane as a helical span at residues 254–274 (TLLLFNVLTQYFCVKGVNILA). Residues 275–307 (SKTNALTLSITLLVRKFISLLLSVRLFDNNLSY) lie on the Lumenal side of the membrane. Residues 308 to 328 (TGYIGVYLVFFGAFIYSLGSI) form a helical membrane-spanning segment. At 329 to 342 (HPRQNDKGAIKKSK) the chain is on the cytoplasmic side.

This sequence belongs to the nucleotide-sugar transporter family. SLC35B subfamily.

It localises to the endoplasmic reticulum. It is found in the endoplasmic reticulum membrane. Functionally, sugar transporter that specifically mediates the transport of UDP-N-acetylglucosamine (UDP-GlcNAc) and is required for cell wall chitin synthesis. In Saccharomyces cerevisiae (strain ATCC 204508 / S288c) (Baker's yeast), this protein is UDP-N-acetylglucosamine transporter YEA4 (YEA4).